The sequence spans 878 residues: F-box DNA helicase protein 1 (878 aa).

Residues 8 to 56 (SCKFYRLPLEIIPLICRFLSVQDIQSFIRVFPSFQTILDSSNDLFWKKK) form the F-box domain.

This sequence belongs to the helicase family. UvrD subfamily. As to quaternary structure, part of the E3 ubiquitin ligase Skp1-Cullin-1-F-box (SCF) complex. Interacts with skp1 and ssb1. Mg(2+) serves as cofactor. Mn(2+) is required as a cofactor.

It localises to the cytoplasm. It is found in the nucleus. It carries out the reaction Couples ATP hydrolysis with the unwinding of duplex DNA by translocating in the 3'-5' direction.. The enzyme catalyses ATP + H2O = ADP + phosphate + H(+). It participates in protein modification; protein ubiquitination. Its function is as follows. Involved in ATP-dependent DNA-unwinding in a 3' to 5' direction, and ATP-ase activities stimulated by the single-stranded DNA-binding protein ssb1. Essential for viability and normal growth of stationary phase cells and in the absence of either srs2 or rqh1 DNA helicase. Involved in DNA recombination repair of strand breaks and stalled or collapsed replication forks, on the rhp51-dependent pathway: promotes rhp51 filament dissolution from stalled forks, thereby inhibiting homologous recombination and preventing excessive recombination. Ubiquitination and DNA helicase activities are essential for controlling rhp51-dependent recombination in the absence of rad22. Plays a role in the processing of toxic recombination intermediates. Promotes proper chromosome segregation. This Schizosaccharomyces pombe (strain 972 / ATCC 24843) (Fission yeast) protein is F-box DNA helicase protein 1 (fbh1).